We begin with the raw amino-acid sequence, 187 residues long: UPF0301 protein CT0663 (187 aa).

Belongs to the UPF0301 (AlgH) family.

In Chlorobaculum tepidum (strain ATCC 49652 / DSM 12025 / NBRC 103806 / TLS) (Chlorobium tepidum), this protein is UPF0301 protein CT0663.